A 319-amino-acid polypeptide reads, in one-letter code: Carbonic anhydrase, chloroplastic (319 aa).

Residues 1-98 constitute a chloroplast transit peptide; the sequence is MSTINGCLTS…AASKVAQITS (98 aa).

Belongs to the beta-class carbonic anhydrase family. In terms of assembly, homohexamer.

Its subcellular location is the plastid. It localises to the chloroplast stroma. The catalysed reaction is hydrogencarbonate + H(+) = CO2 + H2O. Its function is as follows. Reversible hydration of carbon dioxide. This Spinacia oleracea (Spinach) protein is Carbonic anhydrase, chloroplastic.